The following is a 305-amino-acid chain: 4-diphosphocytidyl-2-C-methyl-D-erythritol kinase (305 aa).

Lysine 18 is a catalytic residue. 103–113 serves as a coordination point for ATP; the sequence is PYGAGLGGGSS. The active site involves aspartate 145.

It belongs to the GHMP kinase family. IspE subfamily.

The catalysed reaction is 4-CDP-2-C-methyl-D-erythritol + ATP = 4-CDP-2-C-methyl-D-erythritol 2-phosphate + ADP + H(+). Its pathway is isoprenoid biosynthesis; isopentenyl diphosphate biosynthesis via DXP pathway; isopentenyl diphosphate from 1-deoxy-D-xylulose 5-phosphate: step 3/6. Its function is as follows. Catalyzes the phosphorylation of the position 2 hydroxy group of 4-diphosphocytidyl-2C-methyl-D-erythritol. This chain is 4-diphosphocytidyl-2-C-methyl-D-erythritol kinase, found in Lawsonia intracellularis (strain PHE/MN1-00).